The primary structure comprises 276 residues: Formamidopyrimidine-DNA glycosylase (276 aa).

Pro-2 acts as the Schiff-base intermediate with DNA in catalysis. Glu-3 acts as the Proton donor in catalysis. The active-site Proton donor; for beta-elimination activity is Lys-59. DNA contacts are provided by His-93, Arg-112, and Arg-155. An FPG-type zinc finger spans residues 240 to 274 (QVYNREGKPCPRCGDKIAKKKVGGRSSYYCPTCQK). Catalysis depends on Arg-264, which acts as the Proton donor; for delta-elimination activity.

Belongs to the FPG family. As to quaternary structure, monomer. The cofactor is Zn(2+).

The enzyme catalyses Hydrolysis of DNA containing ring-opened 7-methylguanine residues, releasing 2,6-diamino-4-hydroxy-5-(N-methyl)formamidopyrimidine.. It catalyses the reaction 2'-deoxyribonucleotide-(2'-deoxyribose 5'-phosphate)-2'-deoxyribonucleotide-DNA = a 3'-end 2'-deoxyribonucleotide-(2,3-dehydro-2,3-deoxyribose 5'-phosphate)-DNA + a 5'-end 5'-phospho-2'-deoxyribonucleoside-DNA + H(+). Its function is as follows. Involved in base excision repair of DNA damaged by oxidation or by mutagenic agents. Acts as a DNA glycosylase that recognizes and removes damaged bases. Has a preference for oxidized purines, such as 7,8-dihydro-8-oxoguanine (8-oxoG). Has AP (apurinic/apyrimidinic) lyase activity and introduces nicks in the DNA strand. Cleaves the DNA backbone by beta-delta elimination to generate a single-strand break at the site of the removed base with both 3'- and 5'-phosphates. The sequence is that of Formamidopyrimidine-DNA glycosylase from Pelotomaculum thermopropionicum (strain DSM 13744 / JCM 10971 / SI).